The primary structure comprises 217 residues: Cytidylate kinase (217 aa).

Residue 9 to 17 (GPAASGKSS) coordinates ATP.

This sequence belongs to the cytidylate kinase family. Type 1 subfamily.

The protein localises to the cytoplasm. The enzyme catalyses CMP + ATP = CDP + ADP. It catalyses the reaction dCMP + ATP = dCDP + ADP. In Bdellovibrio bacteriovorus (strain ATCC 15356 / DSM 50701 / NCIMB 9529 / HD100), this protein is Cytidylate kinase.